Reading from the N-terminus, the 160-residue chain is Peptide deformylase 1 (160 aa).

Cys-90 and His-132 together coordinate Fe cation. Residue Glu-133 is part of the active site. His-136 serves as a coordination point for Fe cation.

The protein belongs to the polypeptide deformylase family. Fe(2+) is required as a cofactor.

The catalysed reaction is N-terminal N-formyl-L-methionyl-[peptide] + H2O = N-terminal L-methionyl-[peptide] + formate. In terms of biological role, removes the formyl group from the N-terminal Met of newly synthesized proteins. Requires at least a dipeptide for an efficient rate of reaction. N-terminal L-methionine is a prerequisite for activity but the enzyme has broad specificity at other positions. The sequence is that of Peptide deformylase 1 (defA) from Bacillus subtilis (strain 168).